The following is a 212-amino-acid chain: Transcriptional regulator GfcR (212 aa).

A disordered region spans residues 38-60; sequence LVERSGTGTEPDTSDDGGPHDIH.

Belongs to the purine/pyrimidine phosphoribosyltransferase family. GfcR subfamily.

Its function is as follows. DNA-binding transcriptional regulator that functions as a regulator of central sugar catabolic pathways. This Haloarcula marismortui (strain ATCC 43049 / DSM 3752 / JCM 8966 / VKM B-1809) (Halobacterium marismortui) protein is Transcriptional regulator GfcR.